The sequence spans 1075 residues: Ataxin-2-like protein (1075 aa).

Met1 is subject to N-acetylmethionine. A compositionally biased stretch (low complexity) spans 1–12; sequence MLKPQPLQQPSQ. Positions 1–115 are disordered; it reads MLKPQPLQQP…KGPPQSPVFE (115 aa). The segment at 98-121 is interaction with MPL; the sequence is SARGQSTGKGPPQSPVFEGVYNNS. Phosphoserine is present on residues Ser103 and Ser111. Tyr118 carries the post-translational modification Phosphotyrosine. Positions 122–199 constitute a Sm domain; that stretch reads RMLHFLTAVV…VMLVHFRNVD (78 aa). Residue Lys207 is modified to N6-acetyllysine. Ser238 carries the phosphoserine modification. Tyr264 is subject to Phosphotyrosine. Ser306 carries the phosphoserine modification. The residue at position 309 (Tyr309) is a Phosphotyrosine. Residues 316–328 show a composition bias toward basic and acidic residues; the sequence is ENDDGRTEEEKHS. Disordered stretches follow at residues 316–521, 551–697, 733–770, 820–849, 865–940, and 1022–1045; these read ENDD…LEPQ, QFKL…SIPV, VSNS…MMQA, SNPR…EQPT, ATQL…SSFP, and PYIG…ADDR. Polar residues predominate over residues 330–342; that stretch reads VQRQGSGRESPSL. Phosphoserine occurs at positions 335 and 339. Residue Lys348 forms a Glycyl lysine isopeptide (Lys-Gly) (interchain with G-Cter in SUMO2) linkage. Phosphotyrosine is present on Tyr349. Residue Arg361 is modified to Asymmetric dimethylarginine. The segment covering 363–380 has biased composition (low complexity); the sequence is GVRCSSSRGGRPGLSSLP. Phosphoserine occurs at positions 391 and 409. Residues 421–433 are compositionally biased toward polar residues; it reads TLSSPSNRPSGET. Phosphoserine is present on Ser449. Composition is skewed to low complexity over residues 450 to 462 and 471 to 485; these read PKSA…SASC and VPTS…SSVS. Residues Ser493 and Ser496 each carry the phosphoserine modification. Residues 505–516 show a composition bias toward basic and acidic residues; the sequence is DVKELSTKEPGR. 4 positions are modified to phosphoserine: Ser557, Ser558, Ser559, and Ser563. The segment covering 571 to 584 has biased composition (basic and acidic residues); the sequence is ILKEEPKGKEKEVD. Position 594 is a phosphoserine (Ser594). A Phosphothreonine modification is found at Thr632. Residues Ser634, Ser674, Ser680, and Ser684 each carry the phosphoserine modification. Low complexity-rich tracts occupy residues 678–694 and 761–770; these read STST…STPS and PASAPPMMQA. The span at 874-898 shows a compositional bias: polar residues; it reads QPATTPTGSQPQSQHAAPSPVQHQA. Low complexity-rich tracts occupy residues 931 to 940 and 1025 to 1037; these read SAQSPQSSFP and GHPQ…QAPG.

This sequence belongs to the ataxin-2 family. As to quaternary structure, interacts with MPL/TPOR and EPOR and dissociates after ligand stimulation. Interacts with DDX6, G3BP1, and ATXN2. Interacts with PRMT1. Interacts with CIC and ATXN1. In terms of processing, thrombopoietin triggers the phosphorylation on tyrosine residues in a way that is dependent on MPL C-terminal domain. Post-translationally, asymmetrically dimethylated. Probably methylated by PRMT1. In terms of tissue distribution, expressed at high levels in thymus, lymph node, spleen, fetal kidney and adult testis. Constitutively associated with MPL and EPOR in hematopoietic cells.

Its subcellular location is the membrane. It is found in the cytoplasm. The protein localises to the nucleus speckle. It localises to the cytoplasmic granule. Involved in the regulation of stress granule and P-body formation. The polypeptide is Ataxin-2-like protein (ATXN2L) (Homo sapiens (Human)).